Here is a 250-residue protein sequence, read N- to C-terminus: tRNA (guanine-N(1)-)-methyltransferase (250 aa).

S-adenosyl-L-methionine is bound by residues G115 and 135-140; that span reads LGDFVL.

The protein belongs to the RNA methyltransferase TrmD family. In terms of assembly, homodimer.

The protein resides in the cytoplasm. It catalyses the reaction guanosine(37) in tRNA + S-adenosyl-L-methionine = N(1)-methylguanosine(37) in tRNA + S-adenosyl-L-homocysteine + H(+). Specifically methylates guanosine-37 in various tRNAs. The polypeptide is tRNA (guanine-N(1)-)-methyltransferase (Legionella pneumophila (strain Paris)).